Reading from the N-terminus, the 527-residue chain is Pentatricopeptide repeat-containing protein At4g25270, chloroplastic (527 aa).

The transit peptide at 1–47 (MVSIVVHKPSFSYPSVSSSSMKKKPRHHQQLKQHRQNQYNNNGFTSL) directs the protein to the chloroplast. The tract at residues 12-44 (SYPSVSSSSMKKKPRHHQQLKQHRQNQYNNNGF) is disordered. A compositionally biased stretch (basic residues) spans 21 to 35 (MKKKPRHHQQLKQHR). 10 PPR repeats span residues 126-156 (NLGI…MSKR), 159-193 (SPFA…GVKP), 194-228 (DRFT…GFGY), 229-259 (DVYV…IPHK), 260-294 (DYVS…GIEP), 295-326 (DKVA…GMEW), 327-361 (ELSV…DTVS), 367-389 (SAHS…NAKP), 390-425 (DGIT…GIDP), and 426-457 (KMEH…MGLE). The tract at residues 462–527 (VWGALLYACY…QMMVDRGLET (66 aa)) is type E motif; degenerate.

The protein belongs to the PPR family. PCMP-E subfamily.

The protein localises to the plastid. Its subcellular location is the chloroplast. The sequence is that of Pentatricopeptide repeat-containing protein At4g25270, chloroplastic (PCMP-E53) from Arabidopsis thaliana (Mouse-ear cress).